The primary structure comprises 117 residues: Small ribosomal subunit protein bS6 (117 aa).

The disordered stretch occupies residues H96–R117.

It belongs to the bacterial ribosomal protein bS6 family.

Functionally, binds together with bS18 to 16S ribosomal RNA. This is Small ribosomal subunit protein bS6 from Jannaschia sp. (strain CCS1).